Here is a 796-residue protein sequence, read N- to C-terminus: Nuclear GTPase SLIP-GC (796 aa).

A GTP-binding site is contributed by 107 to 114 (GITGAGKS). Coiled-coil stretches lie at residues 158 to 185 (SDQE…EEAD) and 742 to 776 (GLCK…LRRS).

The protein resides in the nucleus speckle. In terms of biological role, nuclear GTPase found in germinal center B-cells, where it may inhibit function of the activation-induced cytidine deaminase AICDA. Reduces somatic hypermutation in B-cells which may enhance genome stability. This chain is Nuclear GTPase SLIP-GC, found in Mus musculus (Mouse).